The chain runs to 849 residues: Putative endoplasmic reticulum mannosidase MNL2 (849 aa).

Topologically, residues 1-12 (MSIARLVYSLFR) are cytoplasmic. A helical; Signal-anchor for type II membrane protein transmembrane segment spans residues 13–32 (RVRSVLLLFITISLLFYYTF). The Lumenal segment spans residues 33-849 (QNEIDILNSY…TQGGHIIKKK (817 aa)). N-linked (GlcNAc...) asparagine glycosylation occurs at asparagine 45. The disordered stretch occupies residues 56–79 (HNTEGSSKLDPPDLSSTGSDRIAT). Cysteine 559 and cysteine 598 form a disulfide bridge.

The protein belongs to the glycosyl hydrolase 47 family. Ca(2+) is required as a cofactor.

Its subcellular location is the endoplasmic reticulum membrane. Its pathway is protein modification; protein glycosylation. Its function is as follows. Putative mannosidase involved in glycoprotein quality control since it is involved in the targeting of misfolded glycoproteins for ER-associated protein degradation (ERAD). This Saccharomyces cerevisiae (strain ATCC 204508 / S288c) (Baker's yeast) protein is Putative endoplasmic reticulum mannosidase MNL2 (MNL2).